The following is a 301-amino-acid chain: Ornithine carbamoyltransferase (301 aa).

Carbamoyl phosphate-binding positions include 46–49 (STRT), Gln73, Arg97, and 124–127 (HPCQ). L-ornithine contacts are provided by residues Asn154, Asp218, and 222-223 (SM). Carbamoyl phosphate is bound by residues 258-259 (CL) and Arg286.

The protein belongs to the aspartate/ornithine carbamoyltransferase superfamily. OTCase family.

Its subcellular location is the cytoplasm. The catalysed reaction is carbamoyl phosphate + L-ornithine = L-citrulline + phosphate + H(+). The protein operates within amino-acid biosynthesis; L-arginine biosynthesis; L-arginine from L-ornithine and carbamoyl phosphate: step 1/3. Its function is as follows. Reversibly catalyzes the transfer of the carbamoyl group from carbamoyl phosphate (CP) to the N(epsilon) atom of ornithine (ORN) to produce L-citrulline. The protein is Ornithine carbamoyltransferase (argF) of Methanothermobacter thermautotrophicus (strain ATCC 29096 / DSM 1053 / JCM 10044 / NBRC 100330 / Delta H) (Methanobacterium thermoautotrophicum).